We begin with the raw amino-acid sequence, 469 residues long: Siroheme synthase (469 aa).

The precorrin-2 dehydrogenase /sirohydrochlorin ferrochelatase stretch occupies residues 1–203 (MDYLPIFTDL…GQEQDAKQEL (203 aa)). NAD(+) contacts are provided by residues 22-23 (DV) and 43-44 (PV). The residue at position 128 (Ser128) is a Phosphoserine. A uroporphyrinogen-III C-methyltransferase region spans residues 214–469 (GQVALIGSGP…LQQSAVVKLA (256 aa)). Pro223 contacts S-adenosyl-L-methionine. Asp246 serves as the catalytic Proton acceptor. Lys268 (proton donor) is an active-site residue. Residues 299 to 301 (GGD), Val304, 329 to 330 (TA), Met381, and Gly410 each bind S-adenosyl-L-methionine.

In the N-terminal section; belongs to the precorrin-2 dehydrogenase / sirohydrochlorin ferrochelatase family. It in the C-terminal section; belongs to the precorrin methyltransferase family.

The catalysed reaction is uroporphyrinogen III + 2 S-adenosyl-L-methionine = precorrin-2 + 2 S-adenosyl-L-homocysteine + H(+). The enzyme catalyses precorrin-2 + NAD(+) = sirohydrochlorin + NADH + 2 H(+). It catalyses the reaction siroheme + 2 H(+) = sirohydrochlorin + Fe(2+). The protein operates within cofactor biosynthesis; adenosylcobalamin biosynthesis; precorrin-2 from uroporphyrinogen III: step 1/1. It functions in the pathway cofactor biosynthesis; adenosylcobalamin biosynthesis; sirohydrochlorin from precorrin-2: step 1/1. It participates in porphyrin-containing compound metabolism; siroheme biosynthesis; precorrin-2 from uroporphyrinogen III: step 1/1. Its pathway is porphyrin-containing compound metabolism; siroheme biosynthesis; siroheme from sirohydrochlorin: step 1/1. The protein operates within porphyrin-containing compound metabolism; siroheme biosynthesis; sirohydrochlorin from precorrin-2: step 1/1. Its function is as follows. Multifunctional enzyme that catalyzes the SAM-dependent methylations of uroporphyrinogen III at position C-2 and C-7 to form precorrin-2 via precorrin-1. Then it catalyzes the NAD-dependent ring dehydrogenation of precorrin-2 to yield sirohydrochlorin. Finally, it catalyzes the ferrochelation of sirohydrochlorin to yield siroheme. This Photobacterium profundum (strain SS9) protein is Siroheme synthase.